We begin with the raw amino-acid sequence, 224 residues long: UPF0758 protein PFL_6051 (224 aa).

Residues 102-224 enclose the MPN domain; that stretch reads ALENPLVVRD…PLSMAEYGWI (123 aa). Zn(2+) is bound by residues H173, H175, and D186. The JAMM motif signature appears at 173–186; that stretch reads HNHPSGICEPSPAD.

This sequence belongs to the UPF0758 family.

In Pseudomonas fluorescens (strain ATCC BAA-477 / NRRL B-23932 / Pf-5), this protein is UPF0758 protein PFL_6051.